The following is a 714-amino-acid chain: Inducible lysine decarboxylase (714 aa).

Position 367 is an N6-(pyridoxal phosphate)lysine (Lys-367).

It belongs to the Orn/Lys/Arg decarboxylase class-I family. As to quaternary structure, homodecamer. Interacts with RavA. Pyridoxal 5'-phosphate is required as a cofactor.

The protein localises to the cytoplasm. It catalyses the reaction L-lysine + H(+) = cadaverine + CO2. The polypeptide is Inducible lysine decarboxylase (cadA) (Salmonella typhi).